The sequence spans 201 residues: Recombination protein RecR (201 aa).

The segment at 60-75 adopts a C4-type zinc-finger fold; it reads CSCCGNVDTIDPCTVC. One can recognise a Toprim domain in the interval 83–178; the sequence is AVIIVVEDVA…RITRLAHGVP (96 aa).

It belongs to the RecR family.

In terms of biological role, may play a role in DNA repair. It seems to be involved in an RecBC-independent recombinational process of DNA repair. It may act with RecF and RecO. The protein is Recombination protein RecR of Sinorhizobium medicae (strain WSM419) (Ensifer medicae).